Here is a 335-residue protein sequence, read N- to C-terminus: Succinylglutamate desuccinylase (335 aa).

The Zn(2+) site is built by histidine 59, glutamate 62, and histidine 151. Glutamate 215 is an active-site residue.

It belongs to the AspA/AstE family. Succinylglutamate desuccinylase subfamily. Zn(2+) serves as cofactor.

It carries out the reaction N-succinyl-L-glutamate + H2O = L-glutamate + succinate. It participates in amino-acid degradation; L-arginine degradation via AST pathway; L-glutamate and succinate from L-arginine: step 5/5. Its function is as follows. Transforms N(2)-succinylglutamate into succinate and glutamate. The chain is Succinylglutamate desuccinylase from Pseudomonas putida (strain ATCC 47054 / DSM 6125 / CFBP 8728 / NCIMB 11950 / KT2440).